The chain runs to 728 residues: Putative ankyrin repeat protein L271 (728 aa).

ANK repeat units lie at residues 142–171 and 173–198; these read SDVN…NIKT and IYSA…DIIL. The segment covering 244-267 has biased composition (low complexity); it reads STKSTKSSGSPKSIKPKKSNQNNN. A disordered region spans residues 244-271; sequence STKSTKSSGSPKSIKPKKSNQNNNAKIN. A coiled-coil region spans residues 292 to 338; it reads TVDKMSSAKEQALNVYKEIENMENFILNKINITKKKALDKIKEIENI. 8 ANK repeats span residues 358 to 383, 384 to 414, 477 to 510, 514 to 543, 547 to 576, 594 to 626, 630 to 659, and 663 to 696; these read TNTD…RQGY, DINK…NYEQ, DDLS…NINS, IGRS…DYSF, NGDT…DTKT, DIKT…NVSS, TKKT…NINS, and LGKT…KILI.

The chain is Putative ankyrin repeat protein L271 from Acanthamoeba polyphaga (Amoeba).